The sequence spans 232 residues: Platelet-activating factor acetylhydrolase IB subunit alpha1 (232 aa).

Position 2 is an N-acetylserine (S2). S2 carries the phosphoserine modification. Residues S47, D192, and H195 contribute to the active site.

Belongs to the 'GDSL' lipolytic enzyme family. Platelet-activating factor acetylhydrolase IB beta/gamma subunits subfamily. As to quaternary structure, forms a catalytic dimer which is either homodimer (alpha1/alpha1 homodimer) or heterodimer with PAFAH1B2 (alpha1/alpha2 heterodimer). Component of the cytosolic (PAF-AH (I)) heterotetrameric enzyme, which is composed of PAFAH1B1 (beta), PAFAH1B2 (alpha2) and PAFAH1B3 (alpha1) subunits. The catalytic activity of the enzyme resides in the alpha1 (PAFAH1B3) and alpha2 (PAFAH1B2) subunits, whereas the beta subunit (PAFAH1B1) has regulatory activity. Trimer formation is not essential for the catalytic activity. Interacts with VLDLR; this interaction may modulate the Reelin pathway.

It is found in the cytoplasm. It carries out the reaction a 1-O-alkyl-2-acetyl-sn-glycero-3-phosphocholine + H2O = a 1-O-alkyl-sn-glycero-3-phosphocholine + acetate + H(+). The enzyme catalyses 1-O-hexadecyl-2-acetyl-sn-glycero-3-phosphocholine + H2O = 1-O-hexadecyl-sn-glycero-3-phosphocholine + acetate + H(+). The catalysed reaction is 1-O-hexadecyl-2-acetyl-sn-glycero-3-phosphate + H2O = 1-O-hexadecyl-sn-glycero-3-phosphate + acetate + H(+). Its activity is regulated as follows. Beta subunit (PAFAH1B1) inhibits the acetylhydrolase activity of the alpha1/alpha1 catalytic homodimer. Functionally, alpha1 catalytic subunit of the cytosolic type I platelet-activating factor (PAF) acetylhydrolase (PAF-AH (I)) heterotetrameric enzyme that catalyzes the hydrolyze of the acetyl group at the sn-2 position of PAF and its analogs and modulates the action of PAF. The activity and substrate specificity of PAF-AH (I) are affected by its subunit composition. Both alpha1/alpha1 homodimer (PAFAH1B3/PAFAH1B3 homodimer) and alpha1/alpha2 heterodimer(PAFAH1B3/PAFAH1B2 heterodimer) hydrolyze 1-O-alkyl-2-acetyl-sn-glycero-3-phosphoric acid (AAGPA) more efficiently than PAF, but they have little hydrolytic activity towards 1-O-alkyl-2-acetyl-sn-glycero-3-phosphorylethanolamine (AAGPE). Plays an important role during the development of brain. The chain is Platelet-activating factor acetylhydrolase IB subunit alpha1 from Bos taurus (Bovine).